Reading from the N-terminus, the 427-residue chain is Histidinol dehydrogenase (427 aa).

Residues serine 232, glutamine 254, and histidine 257 each contribute to the substrate site. Residues glutamine 254 and histidine 257 each coordinate Zn(2+). Catalysis depends on proton acceptor residues glutamate 322 and histidine 323. Substrate contacts are provided by histidine 323, aspartate 356, glutamate 410, and histidine 415. A Zn(2+)-binding site is contributed by aspartate 356. Histidine 415 is a binding site for Zn(2+).

This sequence belongs to the histidinol dehydrogenase family. Requires Zn(2+) as cofactor.

It carries out the reaction L-histidinol + 2 NAD(+) + H2O = L-histidine + 2 NADH + 3 H(+). Its pathway is amino-acid biosynthesis; L-histidine biosynthesis; L-histidine from 5-phospho-alpha-D-ribose 1-diphosphate: step 9/9. Its function is as follows. Catalyzes the sequential NAD-dependent oxidations of L-histidinol to L-histidinaldehyde and then to L-histidine. The protein is Histidinol dehydrogenase of Listeria monocytogenes serotype 4b (strain F2365).